Consider the following 89-residue polypeptide: Small ribosomal subunit protein uS15 (89 aa).

Belongs to the universal ribosomal protein uS15 family. As to quaternary structure, part of the 30S ribosomal subunit. Forms a bridge to the 50S subunit in the 70S ribosome, contacting the 23S rRNA.

Its function is as follows. One of the primary rRNA binding proteins, it binds directly to 16S rRNA where it helps nucleate assembly of the platform of the 30S subunit by binding and bridging several RNA helices of the 16S rRNA. Functionally, forms an intersubunit bridge (bridge B4) with the 23S rRNA of the 50S subunit in the ribosome. The sequence is that of Small ribosomal subunit protein uS15 from Frankia alni (strain DSM 45986 / CECT 9034 / ACN14a).